The sequence spans 100 residues: Large ribosomal subunit protein uL23 (100 aa).

Belongs to the universal ribosomal protein uL23 family. Part of the 50S ribosomal subunit. Contacts protein L29, and trigger factor when it is bound to the ribosome.

In terms of biological role, one of the early assembly proteins it binds 23S rRNA. One of the proteins that surrounds the polypeptide exit tunnel on the outside of the ribosome. Forms the main docking site for trigger factor binding to the ribosome. The sequence is that of Large ribosomal subunit protein uL23 from Prochlorococcus marinus (strain MIT 9313).